The primary structure comprises 1035 residues: Ephrin type-A receptor 6 (1035 aa).

Positions 1-22 (MGGCEVREFLLQFGFFLPLLTA) are cleaved as a signal peptide. Topologically, residues 23 to 549 (WTGDCSHVSN…MAAEQGQILV (527 aa)) are extracellular. Residues 33-211 (QVVLLDTTTV…FYKKCPFTVR (179 aa)) enclose the Eph LBD domain. Fibronectin type-III domains lie at 330-440 (PPSA…TDHD) and 441-536 (APSL…TGDE). N-linked (GlcNAc...) asparagine glycans are attached at residues Asn-342, Asn-396, and Asn-409. The helical transmembrane segment at 550 to 570 (IATAAVGGFTLLVILTLFFLI) threads the bilayer. Residues 571 to 1035 (TGRCQWYIKA…MHIQEKGFHV (465 aa)) lie on the Cytoplasmic side of the membrane. Tyr-605 and Tyr-611 each carry phosphotyrosine; by autocatalysis. The Protein kinase domain occupies 630 to 943 (IRIERVIGAG…RNPSALHTLV (314 aa)). ATP contacts are provided by residues 636–644 (IGAGEFGEV) and Lys-662. Asp-797 functions as the Proton acceptor in the catalytic mechanism. 2 positions are modified to phosphotyrosine; by autocatalysis: Tyr-830 and Tyr-977. The 65-residue stretch at 960–1024 (PLFVTVGDWL…VSSIQTLRLH (65 aa)) folds into the SAM domain. Residues 1033–1035 (FHV) carry the PDZ-binding motif.

It belongs to the protein kinase superfamily. Tyr protein kinase family. Ephrin receptor subfamily. As to quaternary structure, heterotetramer upon binding of the ligand. The heterotetramer is composed of an ephrin dimer and a receptor dimer. Oligomerization is probably required to induce biological responses. Interacts (via SAM domain) with ANKS1A (via SAM domain).

Its subcellular location is the membrane. It catalyses the reaction L-tyrosyl-[protein] + ATP = O-phospho-L-tyrosyl-[protein] + ADP + H(+). In terms of biological role, receptor tyrosine kinase which binds promiscuously GPI-anchored ephrin-A family ligands residing on adjacent cells, leading to contact-dependent bidirectional signaling into neighboring cells. The signaling pathway downstream of the receptor is referred to as forward signaling while the signaling pathway downstream of the ephrin ligand is referred to as reverse signaling. This Mus musculus (Mouse) protein is Ephrin type-A receptor 6 (Epha6).